A 393-amino-acid polypeptide reads, in one-letter code: Phosphoenolpyruvate/phosphate translocator 3, chloroplastic (393 aa).

A chloroplast-targeting transit peptide spans 1-65 (MQRAAAASRA…LSGGRAVTAR (65 aa)). Transmembrane regions (helical) follow at residues 89–109 (LAET…NIYF), 124–144 (YTIT…MWAL), 164–183 (AAGH…KVAV), 195–217 (FFTV…LGSL), 232–249 (LSFN…NLLY), 270–290 (INLF…LMLF), and 362–382 (TPIS…VFLY). The EamA domain occupies 123-228 (PYTITAFQLA…PIVGGVALAS (106 aa)).

It belongs to the TPT transporter family. PPT (TC 2.A.7.9) subfamily.

It localises to the plastid. Its subcellular location is the chloroplast membrane. Functionally, phosphoenolpyruvate/phosphate translocator that transports phosphoenolpyruvate (PEP) and dihydroxyacetone phosphate. The polypeptide is Phosphoenolpyruvate/phosphate translocator 3, chloroplastic (PPT3) (Oryza sativa subsp. japonica (Rice)).